An 81-amino-acid polypeptide reads, in one-letter code: Gamma-conotoxin-like TeA53 (81 aa).

The first 19 residues, 1–19 (MQKLTILLLVAAVLMSTQA), serve as a signal peptide directing secretion. Residues 20-42 (LNQEQHQRAKINLLSKRKPPAER) constitute a propeptide that is removed on maturation. 3 cysteine pairs are disulfide-bonded: Cys-49-Cys-63, Cys-56-Cys-67, and Cys-62-Cys-72.

The protein belongs to the conotoxin O2 superfamily. Expressed by the venom duct.

It is found in the secreted. In terms of biological role, gamma-conotoxins may act on voltage-gated non-specific cation pacemaker channels (HCN). This chain is Gamma-conotoxin-like TeA53, found in Conus textile (Cloth-of-gold cone).